Reading from the N-terminus, the 225-residue chain is Thymidylate kinase (225 aa).

An ATP-binding site is contributed by glycine 10–serine 17.

This sequence belongs to the thymidylate kinase family.

It carries out the reaction dTMP + ATP = dTDP + ADP. Phosphorylation of dTMP to form dTDP in both de novo and salvage pathways of dTTP synthesis. This Polaromonas sp. (strain JS666 / ATCC BAA-500) protein is Thymidylate kinase.